The following is a 365-amino-acid chain: Methylthioribose-1-phosphate isomerase (365 aa).

Residues 53 to 55 (RGA), Arg-90, and Gln-201 contribute to the substrate site. Residue Asp-242 is the Proton donor of the active site. Substrate is bound at residue 252 to 253 (NK).

The protein belongs to the eIF-2B alpha/beta/delta subunits family. MtnA subfamily.

It catalyses the reaction 5-(methylsulfanyl)-alpha-D-ribose 1-phosphate = 5-(methylsulfanyl)-D-ribulose 1-phosphate. Its pathway is amino-acid biosynthesis; L-methionine biosynthesis via salvage pathway; L-methionine from S-methyl-5-thio-alpha-D-ribose 1-phosphate: step 1/6. Its function is as follows. Catalyzes the interconversion of methylthioribose-1-phosphate (MTR-1-P) into methylthioribulose-1-phosphate (MTRu-1-P). This is Methylthioribose-1-phosphate isomerase from Methylorubrum extorquens (strain CM4 / NCIMB 13688) (Methylobacterium extorquens).